The sequence spans 176 residues: Ribosome maturation factor RimM (176 aa).

In terms of domain architecture, PRC barrel spans 97 to 176 (GDEFYWRELV…TIQVDWDPSF (80 aa)).

It belongs to the RimM family. As to quaternary structure, binds ribosomal protein uS19.

The protein localises to the cytoplasm. An accessory protein needed during the final step in the assembly of 30S ribosomal subunit, possibly for assembly of the head region. Essential for efficient processing of 16S rRNA. May be needed both before and after RbfA during the maturation of 16S rRNA. It has affinity for free ribosomal 30S subunits but not for 70S ribosomes. This is Ribosome maturation factor RimM from Pseudoalteromonas atlantica (strain T6c / ATCC BAA-1087).